The following is a 158-amino-acid chain: NAD(P)H-quinone oxidoreductase subunit J, chloroplastic (158 aa).

It belongs to the complex I 30 kDa subunit family. In terms of assembly, NDH is composed of at least 16 different subunits, 5 of which are encoded in the nucleus.

Its subcellular location is the plastid. It is found in the chloroplast thylakoid membrane. It catalyses the reaction a plastoquinone + NADH + (n+1) H(+)(in) = a plastoquinol + NAD(+) + n H(+)(out). It carries out the reaction a plastoquinone + NADPH + (n+1) H(+)(in) = a plastoquinol + NADP(+) + n H(+)(out). NDH shuttles electrons from NAD(P)H:plastoquinone, via FMN and iron-sulfur (Fe-S) centers, to quinones in the photosynthetic chain and possibly in a chloroplast respiratory chain. The immediate electron acceptor for the enzyme in this species is believed to be plastoquinone. Couples the redox reaction to proton translocation, and thus conserves the redox energy in a proton gradient. The sequence is that of NAD(P)H-quinone oxidoreductase subunit J, chloroplastic from Crucihimalaya wallichii (Rock-cress).